The following is a 126-amino-acid chain: Phosphoribosyl-AMP cyclohydrolase (126 aa).

D82 contacts Mg(2+). Residue C83 participates in Zn(2+) binding. Residues D84 and D86 each coordinate Mg(2+). The Zn(2+) site is built by C99 and C106.

This sequence belongs to the PRA-CH family. Homodimer. The cofactor is Mg(2+). Zn(2+) serves as cofactor.

Its subcellular location is the cytoplasm. It catalyses the reaction 1-(5-phospho-beta-D-ribosyl)-5'-AMP + H2O = 1-(5-phospho-beta-D-ribosyl)-5-[(5-phospho-beta-D-ribosylamino)methylideneamino]imidazole-4-carboxamide. Its pathway is amino-acid biosynthesis; L-histidine biosynthesis; L-histidine from 5-phospho-alpha-D-ribose 1-diphosphate: step 3/9. Functionally, catalyzes the hydrolysis of the adenine ring of phosphoribosyl-AMP. The polypeptide is Phosphoribosyl-AMP cyclohydrolase (Micrococcus luteus (strain ATCC 4698 / DSM 20030 / JCM 1464 / CCM 169 / CCUG 5858 / IAM 1056 / NBRC 3333 / NCIMB 9278 / NCTC 2665 / VKM Ac-2230) (Micrococcus lysodeikticus)).